The sequence spans 80 residues: Clavanin-C (80 aa).

Positions 1–19 (MKTTILILLILGLGINAKS) are cleaved as a signal peptide. Residues 20-29 (LEERKSEEEK) constitute a propeptide that is removed on maturation. Phenylalanine amide is present on Phe-52. Positions 54–80 (DDQQDNGKFYGHYAEDNGKHWYDTGDQ) are excised as a propeptide.

As to expression, hemocytes and pharyngeal tissues.

It is found in the secreted. Functionally, has antimicrobial activity against E.coli, L.monocytogenes and C.albicans. This chain is Clavanin-C, found in Styela clava (Sea squirt).